Here is a 334-residue protein sequence, read N- to C-terminus: Holliday junction branch migration complex subunit RuvB (334 aa).

The interval 4–184 is large ATPase domain (RuvB-L); sequence EDRLISGTQK…FGIVQRLEYY (181 aa). Residues Ile-23, Arg-24, Gly-65, Lys-68, Thr-69, Thr-70, 131–133, Arg-174, Tyr-184, and Arg-221 each bind ATP; that span reads EDY. Thr-69 provides a ligand contact to Mg(2+). The segment at 185 to 255 is small ATPAse domain (RuvB-S); that stretch reads DLKSLTRIVL…VAKLALDMLE (71 aa). A head domain (RuvB-H) region spans residues 258–334; it reads NEGFDYMDRK…YLHFGFDKPQ (77 aa). Residues Arg-313 and Arg-318 each coordinate DNA.

This sequence belongs to the RuvB family. As to quaternary structure, homohexamer. Forms an RuvA(8)-RuvB(12)-Holliday junction (HJ) complex. HJ DNA is sandwiched between 2 RuvA tetramers; dsDNA enters through RuvA and exits via RuvB. An RuvB hexamer assembles on each DNA strand where it exits the tetramer. Each RuvB hexamer is contacted by two RuvA subunits (via domain III) on 2 adjacent RuvB subunits; this complex drives branch migration. In the full resolvosome a probable DNA-RuvA(4)-RuvB(12)-RuvC(2) complex forms which resolves the HJ.

It localises to the cytoplasm. It carries out the reaction ATP + H2O = ADP + phosphate + H(+). The RuvA-RuvB-RuvC complex processes Holliday junction (HJ) DNA during genetic recombination and DNA repair, while the RuvA-RuvB complex plays an important role in the rescue of blocked DNA replication forks via replication fork reversal (RFR). RuvA specifically binds to HJ cruciform DNA, conferring on it an open structure. The RuvB hexamer acts as an ATP-dependent pump, pulling dsDNA into and through the RuvAB complex. RuvB forms 2 homohexamers on either side of HJ DNA bound by 1 or 2 RuvA tetramers; 4 subunits per hexamer contact DNA at a time. Coordinated motions by a converter formed by DNA-disengaged RuvB subunits stimulates ATP hydrolysis and nucleotide exchange. Immobilization of the converter enables RuvB to convert the ATP-contained energy into a lever motion, pulling 2 nucleotides of DNA out of the RuvA tetramer per ATP hydrolyzed, thus driving DNA branch migration. The RuvB motors rotate together with the DNA substrate, which together with the progressing nucleotide cycle form the mechanistic basis for DNA recombination by continuous HJ branch migration. Branch migration allows RuvC to scan DNA until it finds its consensus sequence, where it cleaves and resolves cruciform DNA. This Psychromonas ingrahamii (strain DSM 17664 / CCUG 51855 / 37) protein is Holliday junction branch migration complex subunit RuvB.